Consider the following 544-residue polypeptide: Probable protein kinase UbiB (544 aa).

The 383-residue stretch at 123–505 (EFDEQALASA…GRQKSHNVRS (383 aa)) folds into the Protein kinase domain. Residues 129–137 (LASASIAQV) and Lys-156 contribute to the ATP site. Catalysis depends on Asp-291, which acts as the Proton acceptor. A helical membrane pass occupies residues 522 to 540 (LPLWLSCGTLVTVLLVLLL).

This sequence belongs to the ABC1 family. UbiB subfamily.

It localises to the cell inner membrane. Its pathway is cofactor biosynthesis; ubiquinone biosynthesis [regulation]. Is probably a protein kinase regulator of UbiI activity which is involved in aerobic coenzyme Q (ubiquinone) biosynthesis. In Actinobacillus pleuropneumoniae serotype 5b (strain L20), this protein is Probable protein kinase UbiB.